The sequence spans 270 residues: uncharacterized protein (270 aa).

Disordered regions lie at residues 35–67 (IKQD…GGNK) and 168–204 (SNNN…DNSN). Low complexity predominate over residues 39 to 48 (NNNNNNNNTN). Positions 49 to 67 (VSLSPSIKSQATSSTGGNK) are enriched in polar residues. The span at 168–191 (SNNNNNNNNNNNNNNNNNNNNNNN) shows a compositional bias: low complexity.

This is an uncharacterized protein from Dictyostelium discoideum (Social amoeba).